Here is a 212-residue protein sequence, read N- to C-terminus: Protein-L-isoaspartate O-methyltransferase 1 (212 aa).

Ser-60 is a catalytic residue.

The protein belongs to the methyltransferase superfamily. L-isoaspartyl/D-aspartyl protein methyltransferase family.

Its subcellular location is the cytoplasm. The catalysed reaction is [protein]-L-isoaspartate + S-adenosyl-L-methionine = [protein]-L-isoaspartate alpha-methyl ester + S-adenosyl-L-homocysteine. Functionally, catalyzes the methyl esterification of L-isoaspartyl residues in peptides and proteins that result from spontaneous decomposition of normal L-aspartyl and L-asparaginyl residues. It plays a role in the repair and/or degradation of damaged proteins. This chain is Protein-L-isoaspartate O-methyltransferase 1, found in Anaeromyxobacter sp. (strain Fw109-5).